Consider the following 150-residue polypeptide: MAGKMINKMMGFLGLEDDLEEDIEEVEEGKNTKNDFTDVESIMNSKRQNKVVSIHTTISAKVRIVKPTTYEEAADICDELKNRKIIVINTTGLETRIAQRLLDFMGGASYALGGDLEEIEKGVYILSPSSVEVSSDLKNELSAKKIFGWK.

It belongs to the SepF family. Homodimer. Interacts with FtsZ.

It is found in the cytoplasm. Its function is as follows. Cell division protein that is part of the divisome complex and is recruited early to the Z-ring. Probably stimulates Z-ring formation, perhaps through the cross-linking of FtsZ protofilaments. Its function overlaps with FtsA. This Clostridium kluyveri (strain NBRC 12016) protein is Cell division protein SepF.